A 176-amino-acid polypeptide reads, in one-letter code: NAD(P)H-quinone oxidoreductase subunit 6, chloroplastic (176 aa).

A run of 5 helical transmembrane segments spans residues 10-30, 33-53, 60-80, 92-112, and 152-172; these read ILVLFGGFVLLLGGLGVVLLT, TFSAFSLGLVLVCISLFYILL, VAQLLIYVGAINVLIIFAVMF, FWTIGDGFTSLVCITIPFSLM, and FYLPFELISIILLVSLIGAIT.

This sequence belongs to the complex I subunit 6 family. As to quaternary structure, NDH is composed of at least 16 different subunits, 5 of which are encoded in the nucleus.

The protein resides in the plastid. It localises to the chloroplast thylakoid membrane. It carries out the reaction a plastoquinone + NADH + (n+1) H(+)(in) = a plastoquinol + NAD(+) + n H(+)(out). The enzyme catalyses a plastoquinone + NADPH + (n+1) H(+)(in) = a plastoquinol + NADP(+) + n H(+)(out). In terms of biological role, NDH shuttles electrons from NAD(P)H:plastoquinone, via FMN and iron-sulfur (Fe-S) centers, to quinones in the photosynthetic chain and possibly in a chloroplast respiratory chain. The immediate electron acceptor for the enzyme in this species is believed to be plastoquinone. Couples the redox reaction to proton translocation, and thus conserves the redox energy in a proton gradient. The protein is NAD(P)H-quinone oxidoreductase subunit 6, chloroplastic (ndhG) of Oryza nivara (Indian wild rice).